The following is a 174-amino-acid chain: Secretion monitor (174 aa).

A signal peptide spans 1–35 (MGILNLWRQFGRRYFWSHLLLGVVAASIGAPTILA).

Belongs to the SecM family.

The protein resides in the cytoplasm. The protein localises to the cytosol. It is found in the periplasm. In terms of biological role, regulates secA expression by translational coupling of the secM secA operon. Translational pausing at a specific Pro residue 5 residues before the end of the protein may allow disruption of a mRNA repressor helix that normally suppresses secA translation initiation. This Photorhabdus laumondii subsp. laumondii (strain DSM 15139 / CIP 105565 / TT01) (Photorhabdus luminescens subsp. laumondii) protein is Secretion monitor.